An 89-amino-acid polypeptide reads, in one-letter code: UPF0367 protein CYB_2632 (89 aa).

Positions 69–89 (SKSGSASPMGTRPGFLAQLQS) are disordered.

Belongs to the UPF0367 family.

The sequence is that of UPF0367 protein CYB_2632 from Synechococcus sp. (strain JA-2-3B'a(2-13)) (Cyanobacteria bacterium Yellowstone B-Prime).